The chain runs to 333 residues: Holliday junction branch migration complex subunit RuvB (333 aa).

Residues 1 to 182 are large ATPase domain (RuvB-L); the sequence is MDERLLSGES…FGVLSRLEYY (182 aa). ATP is bound by residues Leu-21, Arg-22, Gly-63, Lys-66, Thr-67, Thr-68, 129-131, Arg-172, Tyr-182, and Arg-219; that span reads EDF. Mg(2+) is bound at residue Thr-67. Positions 183 to 253 are small ATPAse domain (RuvB-S); sequence TVDQLSAIVE…ITQMALELLQ (71 aa). The head domain (RuvB-H) stretch occupies residues 256–333; the sequence is KLGLDHIDHK…QHFGMEMPKI (78 aa). Arg-311 and Arg-316 together coordinate DNA.

It belongs to the RuvB family. As to quaternary structure, homohexamer. Forms an RuvA(8)-RuvB(12)-Holliday junction (HJ) complex. HJ DNA is sandwiched between 2 RuvA tetramers; dsDNA enters through RuvA and exits via RuvB. An RuvB hexamer assembles on each DNA strand where it exits the tetramer. Each RuvB hexamer is contacted by two RuvA subunits (via domain III) on 2 adjacent RuvB subunits; this complex drives branch migration. In the full resolvosome a probable DNA-RuvA(4)-RuvB(12)-RuvC(2) complex forms which resolves the HJ.

Its subcellular location is the cytoplasm. The catalysed reaction is ATP + H2O = ADP + phosphate + H(+). Its function is as follows. The RuvA-RuvB-RuvC complex processes Holliday junction (HJ) DNA during genetic recombination and DNA repair, while the RuvA-RuvB complex plays an important role in the rescue of blocked DNA replication forks via replication fork reversal (RFR). RuvA specifically binds to HJ cruciform DNA, conferring on it an open structure. The RuvB hexamer acts as an ATP-dependent pump, pulling dsDNA into and through the RuvAB complex. RuvB forms 2 homohexamers on either side of HJ DNA bound by 1 or 2 RuvA tetramers; 4 subunits per hexamer contact DNA at a time. Coordinated motions by a converter formed by DNA-disengaged RuvB subunits stimulates ATP hydrolysis and nucleotide exchange. Immobilization of the converter enables RuvB to convert the ATP-contained energy into a lever motion, pulling 2 nucleotides of DNA out of the RuvA tetramer per ATP hydrolyzed, thus driving DNA branch migration. The RuvB motors rotate together with the DNA substrate, which together with the progressing nucleotide cycle form the mechanistic basis for DNA recombination by continuous HJ branch migration. Branch migration allows RuvC to scan DNA until it finds its consensus sequence, where it cleaves and resolves cruciform DNA. The protein is Holliday junction branch migration complex subunit RuvB of Bacillus cytotoxicus (strain DSM 22905 / CIP 110041 / 391-98 / NVH 391-98).